Here is a 527-residue protein sequence, read N- to C-terminus: Protein disulfide-isomerase A2 (527 aa).

An N-terminal signal peptide occupies residues 1–20; the sequence is MDKQLLPVLLLLLGVSGSWG. The segment at 20 to 41 is disordered; that stretch reads GQGEEPGGPSEVLPEEPTGEEV. Positions 29-155 constitute a Thioredoxin 1 domain; sequence SEVLPEEPTG…IAEWLRRRVG (127 aa). Active-site nucleophile residues include cysteine 74 and cysteine 77. A disulfide bond links cysteine 74 and cysteine 77. Asparagine 130 and asparagine 287 each carry an N-linked (GlcNAc...) asparagine glycan. The Thioredoxin 2 domain maps to 355–499; the sequence is VIAITAASVA…FSKFLDSGGH (145 aa). Residues cysteine 421 and cysteine 424 each act as nucleophile in the active site. Cysteine 421 and cysteine 424 are disulfide-bonded. A disordered region spans residues 495–527; that stretch reads DSGGHLPKEEPKEPAASAPEAQANSTLGPKEEL. N-linked (GlcNAc...) asparagine glycosylation occurs at asparagine 518. The short motif at 524-527 is the Prevents secretion from ER element; the sequence is KEEL.

Belongs to the protein disulfide isomerase family. Part of a large chaperone multiprotein complex comprising DNAJB11, HSP90B1, HSPA5, HYOU, PDIA2, PDIA4, PDIA6, PPIB, SDF2L1, UGGT1 and very small amounts of ERP29, but not, or at very low levels, CALR nor CANX. In terms of processing, glycosylated. Highly expressed in pancreas.

Its subcellular location is the endoplasmic reticulum lumen. It carries out the reaction Catalyzes the rearrangement of -S-S- bonds in proteins.. Its function is as follows. Acts as an intracellular estrogen-binding protein. May be involved in modulating cellular levels and biological functions of estrogens in the pancreas. May act as a chaperone that inhibits aggregation of misfolded proteins. The sequence is that of Protein disulfide-isomerase A2 from Mus musculus (Mouse).